Reading from the N-terminus, the 136-residue chain is Evasin P991 (136 aa).

Positions 1–28 (MHSTIVYACLLALAVFVALHGTPLAALA) are cleaved as a signal peptide. N41, N61, N64, N78, N92, N100, and N122 each carry an N-linked (GlcNAc...) asparagine glycan. 4 cysteine pairs are disulfide-bonded: C55–C77, C73–C114, C90–C119, and C109–C128.

It localises to the secreted. Salivary chemokine-binding protein which has chemokine-neutralizing activity and binds to host chemokines CCL2, CCL3, CCL3L1, CCL4, CCL4L1, CCL5, CCL6, CCL7, CCL8, CCL9, CCL11, CCL12, CCL13, CCL14, CCL16, CCL17, CCL18, CCL19, CCL22, CCL23, CCL24 and CCL27. This Amblyomma cajennense (Cayenne tick) protein is Evasin P991.